A 166-amino-acid polypeptide reads, in one-letter code: uncharacterized protein (166 aa).

The tract at residues Met1–Ile58 is may interact with smn1.

As to quaternary structure, part of the core SMN complex at least composed of smn1, yip11/gem2, gem6, gem7 and gem8. Interacts with smn1; the interaction is direct. Interacts with gem7; the interaction is direct.

It localises to the cytoplasm. Its subcellular location is the nucleus. Its function is as follows. The SMN complex catalyzes the assembly of small nuclear ribonucleoproteins (snRNPs), the building blocks of the spliceosome, and thereby plays an important role in the splicing of cellular pre-mRNAs. Most spliceosomal snRNPs contain a common set of Sm proteins SNRPB, SNRPD1, SNRPD2, SNRPD3, SNRPE, SNRPF and SNRPG that assemble in a heptameric protein ring on the Sm site of the small nuclear RNA to form the core snRNP (Sm core). In the cytosol, the Sm proteins SNRPD1, SNRPD2, SNRPE, SNRPF and SNRPG are trapped in an inactive 6S pICln-Sm complex by the chaperone CLNS1A that controls the assembly of the core snRNP. To assemble core snRNPs, the SMN complex accepts the trapped 5Sm proteins from CLNS1A forming an intermediate. Binding of snRNA inside 5Sm triggers eviction of the SMN complex, thereby allowing binding of SNRPD3 and SNRPB to complete assembly of the core snRNP. This is an uncharacterized protein from Schizosaccharomyces pombe (strain 972 / ATCC 24843) (Fission yeast).